A 322-amino-acid chain; its full sequence is Tropinone reductase homolog At2g29260, chloroplastic (322 aa).

The N-terminal 61 residues, 1-61 (MVLDMASHLY…YASQSSIAIT (61 aa)), are a transit peptide targeting the chloroplast. 74–98 (LVTGGTRGIGRAIVEELAGLGAEVH) contributes to the NADP(+) binding site. Ser-207 serves as a coordination point for substrate.

The protein belongs to the short-chain dehydrogenases/reductases (SDR) family. SDR65C subfamily.

It is found in the plastid. The protein localises to the chloroplast. This chain is Tropinone reductase homolog At2g29260, chloroplastic, found in Arabidopsis thaliana (Mouse-ear cress).